The sequence spans 132 residues: Ribosome-binding factor A (132 aa).

The protein belongs to the RbfA family. As to quaternary structure, monomer. Binds 30S ribosomal subunits, but not 50S ribosomal subunits or 70S ribosomes.

It is found in the cytoplasm. Its function is as follows. One of several proteins that assist in the late maturation steps of the functional core of the 30S ribosomal subunit. Associates with free 30S ribosomal subunits (but not with 30S subunits that are part of 70S ribosomes or polysomes). Required for efficient processing of 16S rRNA. May interact with the 5'-terminal helix region of 16S rRNA. In Pseudomonas putida (strain GB-1), this protein is Ribosome-binding factor A.